Here is a 315-residue protein sequence, read N- to C-terminus: Acetaldehyde dehydrogenase 1 (315 aa).

Position 12–15 (12–15 (SGNI)) interacts with NAD(+). The active-site Acyl-thioester intermediate is Cys132. NAD(+) contacts are provided by residues 163–171 (SAGPGTRAN) and Asn291.

The protein belongs to the acetaldehyde dehydrogenase family.

The enzyme catalyses acetaldehyde + NAD(+) + CoA = acetyl-CoA + NADH + H(+). The chain is Acetaldehyde dehydrogenase 1 from Paraburkholderia phymatum (strain DSM 17167 / CIP 108236 / LMG 21445 / STM815) (Burkholderia phymatum).